A 515-amino-acid chain; its full sequence is Bifunctional purine biosynthesis protein PurH (515 aa).

The MGS-like domain maps to 1-145 (MTKRALISVS…KNHASVTVVV (145 aa)).

The protein belongs to the PurH family.

The catalysed reaction is (6R)-10-formyltetrahydrofolate + 5-amino-1-(5-phospho-beta-D-ribosyl)imidazole-4-carboxamide = 5-formamido-1-(5-phospho-D-ribosyl)imidazole-4-carboxamide + (6S)-5,6,7,8-tetrahydrofolate. It catalyses the reaction IMP + H2O = 5-formamido-1-(5-phospho-D-ribosyl)imidazole-4-carboxamide. Its pathway is purine metabolism; IMP biosynthesis via de novo pathway; 5-formamido-1-(5-phospho-D-ribosyl)imidazole-4-carboxamide from 5-amino-1-(5-phospho-D-ribosyl)imidazole-4-carboxamide (10-formyl THF route): step 1/1. It functions in the pathway purine metabolism; IMP biosynthesis via de novo pathway; IMP from 5-formamido-1-(5-phospho-D-ribosyl)imidazole-4-carboxamide: step 1/1. In Streptococcus mutans serotype c (strain ATCC 700610 / UA159), this protein is Bifunctional purine biosynthesis protein PurH.